Here is a 124-residue protein sequence, read N- to C-terminus: Large ribosomal subunit protein bL19 (124 aa).

Belongs to the bacterial ribosomal protein bL19 family.

Functionally, this protein is located at the 30S-50S ribosomal subunit interface and may play a role in the structure and function of the aminoacyl-tRNA binding site. The sequence is that of Large ribosomal subunit protein bL19 from Orientia tsutsugamushi (strain Ikeda) (Rickettsia tsutsugamushi).